A 213-amino-acid polypeptide reads, in one-letter code: Orotate phosphoribosyltransferase (213 aa).

Lys-26 serves as a coordination point for 5-phospho-alpha-D-ribose 1-diphosphate. Position 34–35 (Phe-34–Phe-35) interacts with orotate. 5-phospho-alpha-D-ribose 1-diphosphate-binding positions include Tyr-72 to Lys-73, Arg-99, Lys-100, Lys-103, His-105, and Asp-124 to Ala-132. The orotate site is built by Thr-128 and Arg-156.

The protein belongs to the purine/pyrimidine phosphoribosyltransferase family. PyrE subfamily. Homodimer. Mg(2+) serves as cofactor.

The catalysed reaction is orotidine 5'-phosphate + diphosphate = orotate + 5-phospho-alpha-D-ribose 1-diphosphate. The protein operates within pyrimidine metabolism; UMP biosynthesis via de novo pathway; UMP from orotate: step 1/2. Functionally, catalyzes the transfer of a ribosyl phosphate group from 5-phosphoribose 1-diphosphate to orotate, leading to the formation of orotidine monophosphate (OMP). The chain is Orotate phosphoribosyltransferase from Salmonella typhi.